The following is a 107-amino-acid chain: Quaternary ammonium compound-resistance protein QacC (107 aa).

The Cytoplasmic portion of the chain corresponds to M1 to P2. A helical transmembrane segment spans residues Y3–L20. At K21 to F29 the chain is on the extracellular side. A helical membrane pass occupies residues I30–S47. Over K48–N56 the chain is Cytoplasmic. Residues I57–I75 form a helical membrane-spanning segment. At I76–I85 the chain is on the extracellular side. A helical transmembrane segment spans residues T86–F103. Residues G104–H107 are Cytoplasmic-facing.

The protein belongs to the drug/metabolite transporter (DMT) superfamily. Small multidrug resistance (SMR) (TC 2.A.7.1) family.

Its subcellular location is the cell membrane. With respect to regulation, ethidium export is inhibited by N-ethylmaleimide (NEM). In terms of biological role, multidrug exporter. Is implicated for the resistance to bacteriocidal quaternary ammonium compounds and ethidium bromide. The sequence is that of Quaternary ammonium compound-resistance protein QacC from Staphylococcus aureus.